The chain runs to 137 residues: Large ribosomal subunit protein uL16 (137 aa).

It belongs to the universal ribosomal protein uL16 family. In terms of assembly, part of the 50S ribosomal subunit.

Its function is as follows. Binds 23S rRNA and is also seen to make contacts with the A and possibly P site tRNAs. This Pseudomonas putida (strain ATCC 47054 / DSM 6125 / CFBP 8728 / NCIMB 11950 / KT2440) protein is Large ribosomal subunit protein uL16.